Here is a 591-residue protein sequence, read N- to C-terminus: Vomeromodulin (591 aa).

The signal sequence occupies residues 1–18 (MWVLQALAIMLSIQAGTL). The segment at 151-172 (NEGNGDSSKPSSGSKATGGLGQ) is disordered. Residues asparagine 421 and asparagine 516 are each glycosylated (N-linked (GlcNAc...) asparagine).

Post-translationally, N-glycosylated. The N-glycans consist mainly of complex sialylated and fucosylated biantennary structures. In terms of tissue distribution, expressed in lung. Not detected in other tissues tested (at protein level).

It is found in the secreted. This Mus musculus (Mouse) protein is Vomeromodulin.